Here is a 250-residue protein sequence, read N- to C-terminus: Coproheme decarboxylase (250 aa).

Fe-coproporphyrin III contacts are provided by residues R131, Y145–K149, H172, and Q185. Y145 is an active-site residue.

This sequence belongs to the ChdC family. Type 1 subfamily. Fe-coproporphyrin III is required as a cofactor.

The catalysed reaction is Fe-coproporphyrin III + 2 H2O2 + 2 H(+) = heme b + 2 CO2 + 4 H2O. It catalyses the reaction Fe-coproporphyrin III + H2O2 + H(+) = harderoheme III + CO2 + 2 H2O. The enzyme catalyses harderoheme III + H2O2 + H(+) = heme b + CO2 + 2 H2O. The protein operates within porphyrin-containing compound metabolism; protoheme biosynthesis. Its function is as follows. Involved in coproporphyrin-dependent heme b biosynthesis. Catalyzes the decarboxylation of Fe-coproporphyrin III (coproheme) to heme b (protoheme IX), the last step of the pathway. The reaction occurs in a stepwise manner with a three-propionate intermediate. This chain is Coproheme decarboxylase, found in Staphylococcus aureus (strain Mu50 / ATCC 700699).